A 498-amino-acid chain; its full sequence is WD repeat-containing protein 55 homolog (498 aa).

Residues 1–131 (MHTHNNFKTP…ATFDLDEDDE (131 aa)) are disordered. Composition is skewed to acidic residues over residues 12-23 (DEDELDDLDEDM) and 31-48 (IEQE…EYDL). WD repeat units lie at residues 154-193 (KLED…NKLL), 198-237 (VHSK…LKKL), 241-279 (AHDD…AIFE), 282-321 (ELED…MYVQ), 324-363 (PYEE…YHCD), and 408-447 (QHNM…DFGE).

It belongs to the WD repeat WDR55 family.

The protein is WD repeat-containing protein 55 homolog of Drosophila simulans (Fruit fly).